Reading from the N-terminus, the 956-residue chain is UvrABC system protein A (956 aa).

33 to 40 (GLSGSGKS) contributes to the ATP binding site. The C4-type zinc finger occupies 252–279 (CPYCGFSVGELEPRMFSFNSPFGACPTC). 2 consecutive ABC transporter domains span residues 309-587 (WRPI…KNSI) and 607-936 (GNGL…KYLK). 639–646 (GVSGSGKS) contacts ATP. A C4-type zinc finger spans residues 738 to 764 (CEACKGDGIIKIEMHFLPDVYVPCEVC).

The protein belongs to the ABC transporter superfamily. UvrA family. As to quaternary structure, forms a heterotetramer with UvrB during the search for lesions.

The protein resides in the cytoplasm. The UvrABC repair system catalyzes the recognition and processing of DNA lesions. UvrA is an ATPase and a DNA-binding protein. A damage recognition complex composed of 2 UvrA and 2 UvrB subunits scans DNA for abnormalities. When the presence of a lesion has been verified by UvrB, the UvrA molecules dissociate. This Listeria monocytogenes serovar 1/2a (strain ATCC BAA-679 / EGD-e) protein is UvrABC system protein A.